Consider the following 106-residue polypeptide: Large ribosomal subunit protein uL24 (106 aa).

Over residues 84-97 (EKIGRELGAKEKAR) the composition is skewed to basic and acidic residues. A disordered region spans residues 84–106 (EKIGRELGAKEKARLQKRKAAAK).

It belongs to the universal ribosomal protein uL24 family. In terms of assembly, part of the 50S ribosomal subunit.

Functionally, one of two assembly initiator proteins, it binds directly to the 5'-end of the 23S rRNA, where it nucleates assembly of the 50S subunit. One of the proteins that surrounds the polypeptide exit tunnel on the outside of the subunit. This is Large ribosomal subunit protein uL24 from Anaeromyxobacter dehalogenans (strain 2CP-C).